Consider the following 298-residue polypeptide: MGCYNGSELQDLGCSSQLLLQPLWDTIRTREAFTRSPIFPVTFSIITYVGFCLPFVVLDVLYPWVPILRRYKIHPDFSPSVKQLLPCLGLTLYQHLVFVFPVTLLHWVRSPALLPQEAPELVQLLSHVLICLLLFDTEIFAWHLLHHKVPWLYRTFHKVHHQNSSSFALATQYMSFWELLSLTFFDVLNVAVLRCHPLTIFTFHVINIWLSVEDHSGYDFPWSTHRLVPFGWYGGVAHHDMHHSQFNCNFAPYFTHWDKMLGTLRSAPLPESLCACGERCVNSRERCAVHLIQKKKQT.

An N-linked (GlcNAc...) asparagine glycan is attached at asparagine 5. 3 helical membrane passes run 38 to 58 (IFPV…FVVL), 88 to 108 (LGLT…LHWV), and 124 to 144 (LLSH…AWHL). Residues 128-263 (VLICLLLFDT…FTHWDKMLGT (136 aa)) form the Fatty acid hydroxylase domain. The Histidine box-1 motif lies at 142–146 (WHLLH). A Histidine box-2 motif is present at residues 157-161 (HKVHH). The N-linked (GlcNAc...) asparagine glycan is linked to asparagine 163. The Histidine box-3 motif lies at 238 to 244 (HHDMHHS).

It belongs to the sterol desaturase family. It depends on Fe cation as a cofactor. N-glycosylated. In terms of tissue distribution, widely expressed at low level and at higher level in the lung. Weakly expressed in the heart, lung and kidney.

The protein resides in the endoplasmic reticulum membrane. The enzyme catalyses cholesterol + AH2 + O2 = 25-hydroxycholesterol + A + H2O. It catalyses the reaction cholesterol + NADPH + O2 + H(+) = 25-hydroxycholesterol + NADP(+) + H2O. Catalyzes the formation of 25-hydroxycholesterol from cholesterol, leading to repress cholesterol biosynthetic enzymes. Plays a key role in cell positioning and movement in lymphoid tissues: 25-hydroxycholesterol is an intermediate in biosynthesis of 7-alpha,25-dihydroxycholesterol (7-alpha,25-OHC), an oxysterol that acts as a ligand for the G protein-coupled receptor GPR183/EBI2, a chemotactic receptor for a number of lymphoid cells. May play an important role in regulating lipid metabolism by synthesizing a corepressor that blocks sterol regulatory element binding protein (SREBP) processing. In testis, production of 25-hydroxycholesterol by macrophages may play a role in Leydig cell differentiation. Required to restrain inflammation in macrophages: production of 25-hydroxycholesterol protects macrophages from cholesterol overload, thereby preventing mitochondrial DNA release and subsequent activation of the AIM2 inflammasome. Interferon-stimulated gene which has broad antiviral activities against a wide range of enveloped viruses. This Mus musculus (Mouse) protein is Cholesterol 25-hydroxylase.